The following is a 393-amino-acid chain: GDNF family receptor alpha-like (393 aa).

Positions 1–19 (MLVFIFLAVTLSSENESSS) are cleaved as a signal peptide. The Extracellular segment spans residues 20–349 (QTNDCAHLIQ…LTGFNSFFNG (330 aa)). Residues asparagine 59, asparagine 65, asparagine 101, and asparagine 115 are each glycosylated (N-linked (GlcNAc...) asparagine). 11 disulfide bridges follow: cysteine 131-cysteine 189, cysteine 138-cysteine 144, cysteine 155-cysteine 167, cysteine 162-cysteine 210, cysteine 191-cysteine 198, cysteine 220-cysteine 291, cysteine 227-cysteine 233, cysteine 244-cysteine 275, cysteine 252-cysteine 258, cysteine 269-cysteine 316, and cysteine 293-cysteine 304. Residues 149 to 228 (ALYLKACSAN…TCLSVIHTCR (80 aa)) form a required for interaction with GDF15 region. A helical membrane pass occupies residues 350-370 (ELLYVVVCMAVTCGILFLVML). The Cytoplasmic portion of the chain corresponds to 371–393 (KLRIQSEKRDPSSIEIAGGVIIQ).

It belongs to the GDNFR family. In terms of assembly, interacts (via the extracellular domain) with GDF15 and RET; receptor of GDF15, mediates cellular signaling through interaction with RET after GDF15-binding. Interaction with RET requires previous GDF15-binding. Cleaved and inactivated by MMP14, inhibiting the GDF15-GFRAL aversive response. Expressed in the brainstem, restricted to cells in the area postrema and the immediately adjacent region of the nucleus tractus solitarius.

The protein localises to the cell membrane. With respect to regulation, specifically inhibited by 3P10 monoclonal antibody. Strongly activated by LY3463251, a long-acting and stable agonist composed of GDF15 conjugated monomeric human IgG4 Fc. In terms of biological role, brainstem-restricted receptor for GDF15 hormone, which triggers an aversive response, characterized by nausea, vomiting, and/or loss of appetite in response to various stresses. The aversive response is both required to reduce continuing exposure to those stresses at the time of exposure and to promote avoidance behavior in the future. The GDF15-GFRAL aversive response is triggered by stresses, such as anticancer drugs (camptothecin or cisplatin), cancers or drugs such as metformin. Upon interaction with its ligand, GDF15, mediates the GDF15-induced autophosphorylation and activation of the RET tyrosine kinase receptor, leading to activation of MAPK- and AKT- signaling pathways. Ligand-binding activates GFRAL-expressing neurons localized in the area postrema and nucleus tractus solitarius of the brainstem. The GDF15-GFRAL signal induces expression of genes involved in metabolism, such as lipid metabolism in adipose tissues. The polypeptide is GDNF family receptor alpha-like (Gfral) (Mus musculus (Mouse)).